Consider the following 173-residue polypeptide: ATP synthase subunit delta (173 aa).

Belongs to the ATPase delta chain family. F-type ATPases have 2 components, F(1) - the catalytic core - and F(0) - the membrane proton channel. F(1) has five subunits: alpha(3), beta(3), gamma(1), delta(1), epsilon(1). F(0) has three main subunits: a(1), b(2) and c(10-14). The alpha and beta chains form an alternating ring which encloses part of the gamma chain. F(1) is attached to F(0) by a central stalk formed by the gamma and epsilon chains, while a peripheral stalk is formed by the delta and b chains.

It is found in the cell inner membrane. Functionally, f(1)F(0) ATP synthase produces ATP from ADP in the presence of a proton or sodium gradient. F-type ATPases consist of two structural domains, F(1) containing the extramembraneous catalytic core and F(0) containing the membrane proton channel, linked together by a central stalk and a peripheral stalk. During catalysis, ATP synthesis in the catalytic domain of F(1) is coupled via a rotary mechanism of the central stalk subunits to proton translocation. In terms of biological role, this protein is part of the stalk that links CF(0) to CF(1). It either transmits conformational changes from CF(0) to CF(1) or is implicated in proton conduction. The sequence is that of ATP synthase subunit delta from Campylobacter jejuni subsp. jejuni serotype O:6 (strain 81116 / NCTC 11828).